A 410-amino-acid chain; its full sequence is MAHTNKHYLDLPGSYFFTEINQRVNTYKKTHPEKSIIRLSIGDVTRPLVPAVIKALHDATDEMGQPSSFHGYGPEHGYEFLIGEIIANDYTSRNVHIEADEIFVSDGTKCDIANIQELFDPSDTVAIIDPVYPVYIDSNVMSGRLGKLINGIWSKLIYLPCTIENNFIPELPTQHPDIIYLCYPNNPTGTVLSKDQLTIWVNYAKKEGAIILFDAAYEAYITDPTIPHSIYEIDGAKEVAIEFRSFSKTAGFTGLRCAYTVIPKELKANTREGNEQYLNMMWNRRQTTKYNGCSYIVQKAAAAIYTPEGQKQIQESIQYYMKNALIIQNAITQMGITAVGGINAPYVWIKTPDNLSSWDFFDLLLQNAGVVGTPGVGFGPHGEGYFRLTGFGSYEDTNKAIERIQKALLI.

Tyr15 and Gly42 together coordinate substrate. Residues Tyr72, 108–109 (TK), Tyr132, Asn186, Tyr217, and 245–247 (SFS) contribute to the pyridoxal 5'-phosphate site. Substrate contacts are provided by Lys109, Tyr132, and Asn186. Lys248 is subject to N6-(pyridoxal phosphate)lysine. Residues Arg256 and Asn291 each coordinate pyridoxal 5'-phosphate. The substrate site is built by Asn291 and Arg387.

The protein belongs to the class-I pyridoxal-phosphate-dependent aminotransferase family. LL-diaminopimelate aminotransferase subfamily. In terms of assembly, homodimer. Pyridoxal 5'-phosphate serves as cofactor.

It carries out the reaction (2S,6S)-2,6-diaminopimelate + 2-oxoglutarate = (S)-2,3,4,5-tetrahydrodipicolinate + L-glutamate + H2O + H(+). The protein operates within amino-acid biosynthesis; L-lysine biosynthesis via DAP pathway; LL-2,6-diaminopimelate from (S)-tetrahydrodipicolinate (aminotransferase route): step 1/1. Involved in the synthesis of meso-diaminopimelate (m-DAP or DL-DAP), required for both lysine and peptidoglycan biosynthesis. Catalyzes the direct conversion of tetrahydrodipicolinate to LL-diaminopimelate. The protein is LL-diaminopimelate aminotransferase of Lawsonia intracellularis (strain PHE/MN1-00).